The primary structure comprises 147 residues: Lipoprotein signal peptidase (147 aa).

A run of 4 helical transmembrane segments spans residues 10–30 (ISIF…IKFL), 34–54 (GIVK…GTAF), 59–79 (FLGS…LVYM), and 87–107 (WFIY…RLIY). Residues Asp112 and Asp130 contribute to the active site. A helical membrane pass occupies residues 121–141 (LHWPAFNVADSAISIGIVLFV).

The protein belongs to the peptidase A8 family.

The protein localises to the cell inner membrane. The catalysed reaction is Release of signal peptides from bacterial membrane prolipoproteins. Hydrolyzes -Xaa-Yaa-Zaa-|-(S,diacylglyceryl)Cys-, in which Xaa is hydrophobic (preferably Leu), and Yaa (Ala or Ser) and Zaa (Gly or Ala) have small, neutral side chains.. Its pathway is protein modification; lipoprotein biosynthesis (signal peptide cleavage). Its function is as follows. This protein specifically catalyzes the removal of signal peptides from prolipoproteins. The protein is Lipoprotein signal peptidase of Thermodesulfovibrio yellowstonii (strain ATCC 51303 / DSM 11347 / YP87).